Here is a 289-residue protein sequence, read N- to C-terminus: Pantothenate synthetase (289 aa).

30-37 (MGNLHEGH) provides a ligand contact to ATP. The active-site Proton donor is histidine 37. A (R)-pantoate-binding site is contributed by glutamine 61. Glutamine 61 is a beta-alanine binding site. ATP is bound at residue 149–152 (GEKD). Glutamine 155 is a binding site for (R)-pantoate. 186–189 (MSSR) contacts ATP.

It belongs to the pantothenate synthetase family. In terms of assembly, homodimer.

The protein resides in the cytoplasm. The enzyme catalyses (R)-pantoate + beta-alanine + ATP = (R)-pantothenate + AMP + diphosphate + H(+). It functions in the pathway cofactor biosynthesis; (R)-pantothenate biosynthesis; (R)-pantothenate from (R)-pantoate and beta-alanine: step 1/1. Catalyzes the condensation of pantoate with beta-alanine in an ATP-dependent reaction via a pantoyl-adenylate intermediate. This chain is Pantothenate synthetase, found in Psychromonas ingrahamii (strain DSM 17664 / CCUG 51855 / 37).